A 795-amino-acid chain; its full sequence is MKFSESWVREWVNPAISTAQLCDQITMLGLEVDGVEKVAGDFSGVVVGEVVECAQHPDADKLRVTKVNVGGDRLLDIVCGAPNCRQGLKVACATEGAVLPGDFKIKKTKLRGQPSEGMLCSFSELGIDVESSGIIELPQNAPVGTNLRDYLTLDDNTVEISLTPNRADCLSIAGIAREIGVVNKLAVNTPHFESVKATITDKVDIQLHAPEACPRYLLRVVKNVNVQAPSPMWLQEKLRRCGIRSIDPVVDVTNYILLELGQPMHAFDAAKVAQPVQVRMAKSGEALVLLDGSTAKLKDNTLLIADQNGPLAMAGIFGGQASGVNAETKDIILEAAFFAPLAIAGRARQYGLHTDSSHRFERGVDFELQRQAMERATALLVEICGGEVGDICEVASDAFLPKLNQVSLRREKLDALLGHHIETETVTDILTRLGLQVSYANDVWQVTSASWRFDIEIEEDLVEEIARIYGYNSIPNKAPLAHLRMREHKEADLDLARIKTALVDADYQEAITYSFVDPKIQSVLHPQQDALVLPNPISVEMSAMRLSLLSGLLGAVQYNQNRQQTRVRLFETGLRFIPDTQAEFGVRQEFVLAAVMTGNKKAEHWAGKAESVDFFDLKGDLESILSLTGTRNLVKFVAKSYPALHPGQSAAIMLNGEEIGFIGTLHPNAAKQLGLNGKTVVFEILWQAIATRQVVQAKEISRFPANRRDLAIVVAESVAASDVLDACREVAGETLTQVNLFDVYQGNGVAEGHKSLAISLIIQDNEKTLEEDDINAVVSVVLSELKQRFNAYLRD.

Residues Ala-39–Arg-148 enclose the tRNA-binding domain. A B5 domain is found at Pro-401 to Asn-476. Mg(2+) contacts are provided by Asp-454, Asp-460, Glu-463, and Glu-464. The 94-residue stretch at Ser-701 to Arg-794 folds into the FDX-ACB domain.

The protein belongs to the phenylalanyl-tRNA synthetase beta subunit family. Type 1 subfamily. As to quaternary structure, tetramer of two alpha and two beta subunits. It depends on Mg(2+) as a cofactor.

The protein localises to the cytoplasm. The catalysed reaction is tRNA(Phe) + L-phenylalanine + ATP = L-phenylalanyl-tRNA(Phe) + AMP + diphosphate + H(+). The chain is Phenylalanine--tRNA ligase beta subunit (pheT) from Pasteurella multocida (strain Pm70).